Reading from the N-terminus, the 517-residue chain is Sterol 14-alpha demethylase CYP51C (517 aa).

A helical membrane pass occupies residues 10 to 30; the sequence is TLPLSVSIPLTTSIIIILSIV. Residue Tyr-115 coordinates lanosterol. Gly-300 serves as a coordination point for itraconazole. Residue Cys-458 coordinates heme.

This sequence belongs to the cytochrome P450 family. Requires heme as cofactor.

It is found in the endoplasmic reticulum membrane. The protein operates within steroid metabolism; ergosterol biosynthesis. Functionally, together with cyp51A and cyp51B, encodes the sterol 14alpha-demethylase that plays a critical role in the third module of ergosterol biosynthesis pathway, being ergosterol the major sterol component in fungal membranes that participates in a variety of functions. Cyp51C does not seem to encode an active sterol 14-alpha-demethylase, but can impact indirectly on sterol 14alpha-demethylation, and is required for full virulence on host wheat ears, but not on Arabidopsis floral tissue or the fruits of apple and tomato. The third module or late pathway involves the ergosterol synthesis itself through consecutive reactions that mainly occur in the endoplasmic reticulum (ER) membrane. In filamentous fungi, during the initial step of this module, lanosterol (lanosta-8,24-dien-3beta-ol) can be metabolized to eburicol. Sterol 14alpha-demethylase catalyzes the three-step oxidative removal of the 14alpha-methyl group (C-32) of both these sterols in the form of formate, and converts eburicol and lanosterol to 14-demethyleburicol (4,4,24-trimethylergosta-8,14,24(28)-trienol) and 4,4-dimethyl-5alpha-cholesta-8,14,24-trien-3beta-ol, respectively, which are further metabolized by other enzymes in the pathway to ergosterol. The protein is Sterol 14-alpha demethylase CYP51C of Gibberella zeae (strain ATCC MYA-4620 / CBS 123657 / FGSC 9075 / NRRL 31084 / PH-1) (Wheat head blight fungus).